The chain runs to 54 residues: Small ribosomal subunit protein uS14 (54 aa).

Residues Cys19, Cys22, Cys37, and Cys40 each contribute to the Zn(2+) site.

The protein belongs to the universal ribosomal protein uS14 family. Zinc-binding uS14 subfamily. Part of the 30S ribosomal subunit. The cofactor is Zn(2+).

Its function is as follows. Binds 16S rRNA, required for the assembly of 30S particles. The protein is Small ribosomal subunit protein uS14 of Aeropyrum pernix (strain ATCC 700893 / DSM 11879 / JCM 9820 / NBRC 100138 / K1).